A 950-amino-acid polypeptide reads, in one-letter code: Lon protease homolog, mitochondrial (950 aa).

A mitochondrion-targeting transit peptide spans 1 to 65; it reads MAASTGYVRL…VPMGGGQWRG (65 aa). Disordered regions lie at residues 67 to 94 and 212 to 243; these read WDAGSRGGSDETSEGGVEDGATASSGEG and PEGLEPEAENKQKSRRKLKRGKKEVGDELGAK. The region spanning 112–360 is the Lon N-terminal domain; the sequence is LPLIAISRNP…KALSLLKKEF (249 aa). Over residues 224 to 233 the composition is skewed to basic residues; it reads KSRRKLKRGK. 513–520 is a binding site for ATP; that stretch reads GPPGVGKT. The region spanning 749–939 is the Lon proteolytic domain; the sequence is VTPPGVVMGL…RDIFRIAFPL (191 aa). Residues serine 845 and lysine 888 contribute to the active site.

It belongs to the peptidase S16 family. In terms of assembly, homohexamer. Organized in a ring with a central cavity. The ATP-binding and proteolytic domains (AP-domain) form a hexameric chamber, while the N-terminal domain is arranged as a trimer of dimers. DNA and RNA binding is stimulated by substrate and inhibited by ATP binding. Interacts with TWNK and mitochondrial DNA polymerase subunit POLG.

It is found in the mitochondrion matrix. It catalyses the reaction Hydrolysis of proteins in presence of ATP.. ATP-dependent serine protease that mediates the selective degradation of misfolded, unassembled or oxidatively damaged polypeptides as well as certain short-lived regulatory proteins in the mitochondrial matrix. Endogenous substrates include mitochondrial steroidogenic acute regulatory (StAR) protein, DELE1, helicase Twinkle (TWNK) and the large ribosomal subunit protein MRPL32/bL32m. MRPL32/bL32m is protected from degradation by LONP1 when it is bound to a nucleic acid (RNA), but TWNK is not. May also have a chaperone function in the assembly of inner membrane protein complexes. Participates in the regulation of mitochondrial gene expression and in the maintenance of the integrity of the mitochondrial genome. Binds to mitochondrial promoters and RNA in a single-stranded, site-specific, and strand-specific manner. May regulate mitochondrial DNA replication and/or gene expression using site-specific, single-stranded DNA binding to target the degradation of regulatory proteins binding to adjacent sites in mitochondrial promoters. The polypeptide is Lon protease homolog, mitochondrial (Lonp1) (Rattus norvegicus (Rat)).